Here is a 1105-residue protein sequence, read N- to C-terminus: DNA polymerase delta catalytic subunit (1105 aa).

Positions 1–46 are disordered; the sequence is MSSGGRGGKRRGAPPPGPSGAAAKRAHPGGTPQPPPPAATAAAPVA. C1015, C1018, C1030, and C1033 together coordinate Zn(2+). A CysA-type zinc finger spans residues 1015–1033; it reads CLGCKAVISGSNQTLCFHC. [4Fe-4S] cluster-binding residues include C1062, C1065, C1075, and C1080. Residues 1062–1080 carry the CysB motif motif; the sequence is CQECQGSLHQDVLCTSRDC.

Belongs to the DNA polymerase type-B family. Heterodimer with subunits of 125 kDa and 50 kDa. The 125 kDa subunit contains the polymerase active site and most likely the active site for the 3'-5' exonuclease activity. [4Fe-4S] cluster serves as cofactor.

It is found in the nucleus. The catalysed reaction is DNA(n) + a 2'-deoxyribonucleoside 5'-triphosphate = DNA(n+1) + diphosphate. Functionally, this polymerase possesses two enzymatic activities: DNA synthesis (polymerase) and an exonucleolytic activity that degrades single-stranded DNA in the 3'- to 5'-direction. This is DNA polymerase delta catalytic subunit (POLD1) from Oryza sativa subsp. japonica (Rice).